A 442-amino-acid polypeptide reads, in one-letter code: Histidinol dehydrogenase (442 aa).

Positions 138, 199, and 222 each coordinate NAD(+). The substrate site is built by S245, Q267, and H270. Residues Q267 and H270 each coordinate Zn(2+). Residues E335 and H336 each act as proton acceptor in the active site. Substrate contacts are provided by H336, D369, E423, and H428. D369 provides a ligand contact to Zn(2+). Residue H428 participates in Zn(2+) binding.

Belongs to the histidinol dehydrogenase family. Requires Zn(2+) as cofactor.

It catalyses the reaction L-histidinol + 2 NAD(+) + H2O = L-histidine + 2 NADH + 3 H(+). It functions in the pathway amino-acid biosynthesis; L-histidine biosynthesis; L-histidine from 5-phospho-alpha-D-ribose 1-diphosphate: step 9/9. Functionally, catalyzes the sequential NAD-dependent oxidations of L-histidinol to L-histidinaldehyde and then to L-histidine. The polypeptide is Histidinol dehydrogenase (Ralstonia nicotianae (strain ATCC BAA-1114 / GMI1000) (Ralstonia solanacearum)).